Here is a 92-residue protein sequence, read N- to C-terminus: Small ribosomal subunit protein uS19 (92 aa).

Belongs to the universal ribosomal protein uS19 family.

Functionally, protein S19 forms a complex with S13 that binds strongly to the 16S ribosomal RNA. The chain is Small ribosomal subunit protein uS19 from Bartonella henselae (strain ATCC 49882 / DSM 28221 / CCUG 30454 / Houston 1) (Rochalimaea henselae).